The chain runs to 417 residues: UDP-N-acetylmuramoylalanine--D-glutamate ligase (417 aa).

101–107 lines the ATP pocket; sequence GTAGKTS.

Belongs to the MurCDEF family.

Its subcellular location is the cytoplasm. It carries out the reaction UDP-N-acetyl-alpha-D-muramoyl-L-alanine + D-glutamate + ATP = UDP-N-acetyl-alpha-D-muramoyl-L-alanyl-D-glutamate + ADP + phosphate + H(+). It functions in the pathway cell wall biogenesis; peptidoglycan biosynthesis. Its function is as follows. Cell wall formation. Catalyzes the addition of glutamate to the nucleotide precursor UDP-N-acetylmuramoyl-L-alanine (UMA). This is UDP-N-acetylmuramoylalanine--D-glutamate ligase from Thermus thermophilus (strain ATCC BAA-163 / DSM 7039 / HB27).